The following is a 166-amino-acid chain: Ribonuclease H2 subunit C (166 aa).

An N-acetylmethionine modification is found at methionine 1.

It belongs to the RNase H2 subunit C family. In terms of assembly, the RNase H2 complex is a heterotrimer composed of the catalytic subunit RNASEH2A and the non-catalytic subunits RNASEH2B and RNASEH2C.

It localises to the nucleus. In terms of biological role, non catalytic subunit of RNase H2, an endonuclease that specifically degrades the RNA of RNA:DNA hybrids. Participates in DNA replication, possibly by mediating the removal of lagging-strand Okazaki fragment RNA primers during DNA replication. Mediates the excision of single ribonucleotides from DNA:RNA duplexes. The polypeptide is Ribonuclease H2 subunit C (Rnaseh2c) (Mus musculus (Mouse)).